A 400-amino-acid chain; its full sequence is uncharacterized protein (400 aa).

An N-terminal signal peptide occupies residues 1–23; it reads MSRKLLLALTFLVVLGIAVVVMA.

This is an uncharacterized protein from Archaeoglobus fulgidus (strain ATCC 49558 / DSM 4304 / JCM 9628 / NBRC 100126 / VC-16).